The sequence spans 70 residues: Protein SlyX homolog (70 aa).

Belongs to the SlyX family.

The sequence is that of Protein SlyX homolog from Shewanella piezotolerans (strain WP3 / JCM 13877).